The chain runs to 220 residues: Deoxyribose-phosphate aldolase 2 (220 aa).

The active-site Proton donor/acceptor is Asp-89. Residue Lys-151 is the Schiff-base intermediate with acetaldehyde of the active site. Catalysis depends on Lys-180, which acts as the Proton donor/acceptor.

It belongs to the DeoC/FbaB aldolase family. DeoC type 1 subfamily.

It localises to the cytoplasm. It catalyses the reaction 2-deoxy-D-ribose 5-phosphate = D-glyceraldehyde 3-phosphate + acetaldehyde. Its pathway is carbohydrate degradation; 2-deoxy-D-ribose 1-phosphate degradation; D-glyceraldehyde 3-phosphate and acetaldehyde from 2-deoxy-alpha-D-ribose 1-phosphate: step 2/2. In terms of biological role, catalyzes a reversible aldol reaction between acetaldehyde and D-glyceraldehyde 3-phosphate to generate 2-deoxy-D-ribose 5-phosphate. This Staphylococcus aureus (strain MRSA252) protein is Deoxyribose-phosphate aldolase 2.